The sequence spans 348 residues: Phosphoribosylformylglycinamidine cyclo-ligase (348 aa).

This sequence belongs to the AIR synthase family.

The protein resides in the cytoplasm. The enzyme catalyses 2-formamido-N(1)-(5-O-phospho-beta-D-ribosyl)acetamidine + ATP = 5-amino-1-(5-phospho-beta-D-ribosyl)imidazole + ADP + phosphate + H(+). It participates in purine metabolism; IMP biosynthesis via de novo pathway; 5-amino-1-(5-phospho-D-ribosyl)imidazole from N(2)-formyl-N(1)-(5-phospho-D-ribosyl)glycinamide: step 2/2. The polypeptide is Phosphoribosylformylglycinamidine cyclo-ligase (Geotalea daltonii (strain DSM 22248 / JCM 15807 / FRC-32) (Geobacter daltonii)).